The sequence spans 388 residues: ATP phosphoribosyltransferase regulatory subunit (388 aa).

Belongs to the class-II aminoacyl-tRNA synthetase family. HisZ subfamily. Heteromultimer composed of HisG and HisZ subunits.

It is found in the cytoplasm. The protein operates within amino-acid biosynthesis; L-histidine biosynthesis; L-histidine from 5-phospho-alpha-D-ribose 1-diphosphate: step 1/9. In terms of biological role, required for the first step of histidine biosynthesis. May allow the feedback regulation of ATP phosphoribosyltransferase activity by histidine. The polypeptide is ATP phosphoribosyltransferase regulatory subunit (Acinetobacter baylyi (strain ATCC 33305 / BD413 / ADP1)).